The chain runs to 227 residues: MNSINIAIDGPASSGKSTVAKIIAKNLNYTYLDTGAMYRCATYLALQHGYEAQDVSKILGLLAERPISFGKAEDGSQTVFLGTEEVTLAIRQNDVTNNVSWVSAIPEIREELVNQQRRIAKDGAIIMDGRDIGTVVLPDAELKIFLVASVDERAERRFKENQEKGIESDFETLKSEIAARDYKDSHREVSPLKAAEDAIEFDTTGVSIEGVVTFIQEKAEKIIDMKN.

10–18 is an ATP binding site; sequence GPASSGKST.

This sequence belongs to the cytidylate kinase family. Type 1 subfamily.

It localises to the cytoplasm. The catalysed reaction is CMP + ATP = CDP + ADP. It catalyses the reaction dCMP + ATP = dCDP + ADP. This is Cytidylate kinase from Streptococcus agalactiae serotype V (strain ATCC BAA-611 / 2603 V/R).